A 389-amino-acid chain; its full sequence is P2X purinoceptor 6 (389 aa).

Over Met-1–Arg-45 the chain is Cytoplasmic. Residues Leu-46–Tyr-66 traverse the membrane as a helical segment. The Extracellular segment spans residues Gln-67–Ala-335. Cystine bridges form between Cys-129/Cys-179, Cys-140/Cys-163, and Cys-146/Cys-173. Residues Asn-167, Asn-197, and Asn-212 are each glycosylated (N-linked (GlcNAc...) asparagine). 2 disulfide bridges follow: Cys-230-Cys-240 and Cys-274-Cys-283. Residues Leu-336–Leu-356 traverse the membrane as a helical segment. Residues Cys-357–Ser-389 lie on the Cytoplasmic side of the membrane.

It belongs to the P2X receptor family. As to quaternary structure, unlike most P2RXs, P2RX6 does not seem to form homotrimers. P2RX6 are likely to form as obligate heteromers with other P2RXs subunits. Forms heterotrimer with P2RX2 with a variable subunit stoichiometry determined by subunit expression levels. Forms heterotrimer with P2RX4; functional differences between homomeric P2RX4 and P2RX4/6 heterotrimer are minor. Forms a P2RX2/P2RX4/P2RX6 heterotrimer. Interacts with SF3A1; resulting in a reduction of the splicing activity. Post-translationally, N-glycosylated. N-linked glycosylation can affect trafficking to the membrane and function. In terms of tissue distribution, predominantly expressed in skeletal muscle. Also expressed in lung.

The protein resides in the cell membrane. It is found in the endoplasmic reticulum. The protein localises to the nucleus. It localises to the nucleus inner membrane. The enzyme catalyses Ca(2+)(in) = Ca(2+)(out). Functionally, acts as a modulatory subunit rather than a functional channel. Unlike other P2XRs members, P2RX6 does not seem to form functional homotrimers. P2RX6 requires the presence of P2RX4 or P2RX2 to form functional heterotrimeric receptors at the plasma membrane. P2RX6 can be translocated to the nucleus, where it interacts with the splicing factor (SF3A1), to reduce the incidence of mRNA splicing. May function as a nuclear regulator of post-transcriptional modifications in neurons. This Mus musculus (Mouse) protein is P2X purinoceptor 6 (P2rx6).